Here is a 180-residue protein sequence, read N- to C-terminus: Colicin-E5 (180 aa).

Disordered stretches follow at residues 24-143 and 155-180; these read AQTD…GSPG and VTQI…KNDQ. Residues 54–76 are compositionally biased toward basic and acidic residues; that stretch reads ESRKKKEDNKRDAEGKLNDELAK. Residues 74 to 180 form a nuclease region; that stretch reads LAKNKGKIPG…RIQWGNKNDQ (107 aa). Positions 106 to 116 are enriched in polar residues; the sequence is NTVSNGATGTS. A compositionally biased stretch (basic and acidic residues) spans 160–171; sequence DKTDPGWVDDSR.

The protein belongs to the colicin/pyosin nuclease family.

In terms of biological role, colicins are polypeptide toxins produced by and active against E.coli and closely related bacteria. This colicin is an endonuclease. This chain is Colicin-E5 (col), found in Escherichia coli.